Consider the following 173-residue polypeptide: Translocon-associated protein subunit delta (173 aa).

A signal peptide spans 1 to 23 (MAAMASFGALALLLLSGLSCCSA). Over 24-144 (EACLEPQITP…SVDHRGTWNG (121 aa)) the chain is Lumenal. A disulfide bond links C26 and C57. K73 participates in a covalent cross-link: Glycyl lysine isopeptide (Lys-Gly) (interchain with G-Cter in ubiquitin). Residues 145 to 165 (PWVSTEVLAAAIGIVIYYLAF) form a helical membrane-spanning segment. The Cytoplasmic portion of the chain corresponds to 166-173 (SAKSHIQA).

It belongs to the TRAP-delta family. As to quaternary structure, heterotetramer of TRAP-alpha, TRAP-beta, TRAP-delta and TRAP-gamma.

The protein localises to the endoplasmic reticulum membrane. Functionally, TRAP proteins are part of a complex whose function is to bind calcium to the ER membrane and thereby regulate the retention of ER resident proteins. The sequence is that of Translocon-associated protein subunit delta (Ssr4) from Rattus norvegicus (Rat).